The primary structure comprises 184 residues: ATP synthase subunit delta (184 aa).

It belongs to the ATPase delta chain family. In terms of assembly, F-type ATPases have 2 components, F(1) - the catalytic core - and F(0) - the membrane proton channel. F(1) has five subunits: alpha(3), beta(3), gamma(1), delta(1), epsilon(1). F(0) has three main subunits: a(1), b(2) and c(10-14). The alpha and beta chains form an alternating ring which encloses part of the gamma chain. F(1) is attached to F(0) by a central stalk formed by the gamma and epsilon chains, while a peripheral stalk is formed by the delta and b chains.

The protein localises to the cell inner membrane. F(1)F(0) ATP synthase produces ATP from ADP in the presence of a proton or sodium gradient. F-type ATPases consist of two structural domains, F(1) containing the extramembraneous catalytic core and F(0) containing the membrane proton channel, linked together by a central stalk and a peripheral stalk. During catalysis, ATP synthesis in the catalytic domain of F(1) is coupled via a rotary mechanism of the central stalk subunits to proton translocation. In terms of biological role, this protein is part of the stalk that links CF(0) to CF(1). It either transmits conformational changes from CF(0) to CF(1) or is implicated in proton conduction. The sequence is that of ATP synthase subunit delta from Rickettsia conorii (strain ATCC VR-613 / Malish 7).